Here is a 463-residue protein sequence, read N- to C-terminus: Argininosuccinate lyase (463 aa).

Belongs to the lyase 1 family. Argininosuccinate lyase subfamily.

It is found in the cytoplasm. The enzyme catalyses 2-(N(omega)-L-arginino)succinate = fumarate + L-arginine. Its pathway is amino-acid biosynthesis; L-arginine biosynthesis; L-arginine from L-ornithine and carbamoyl phosphate: step 3/3. The protein is Argininosuccinate lyase of Prochlorococcus marinus (strain NATL1A).